The sequence spans 505 residues: Lysine--tRNA ligase (505 aa).

Glu415 and Glu422 together coordinate Mg(2+).

Belongs to the class-II aminoacyl-tRNA synthetase family. Homodimer. Requires Mg(2+) as cofactor.

It is found in the cytoplasm. The enzyme catalyses tRNA(Lys) + L-lysine + ATP = L-lysyl-tRNA(Lys) + AMP + diphosphate. This chain is Lysine--tRNA ligase, found in Salmonella typhi.